Consider the following 392-residue polypeptide: 8-amino-7-oxononanoate synthase (392 aa).

A substrate-binding site is contributed by Arg26. Residue 113-114 (GY) coordinates pyridoxal 5'-phosphate. His138 provides a ligand contact to substrate. 3 residues coordinate pyridoxal 5'-phosphate: Ser186, His214, and Thr241. Lys244 is modified (N6-(pyridoxal phosphate)lysine). Thr353 contributes to the substrate binding site.

Belongs to the class-II pyridoxal-phosphate-dependent aminotransferase family. BioF subfamily. In terms of assembly, homodimer. Pyridoxal 5'-phosphate serves as cofactor.

The catalysed reaction is 6-carboxyhexanoyl-[ACP] + L-alanine + H(+) = (8S)-8-amino-7-oxononanoate + holo-[ACP] + CO2. The protein operates within cofactor biosynthesis; biotin biosynthesis. In terms of biological role, catalyzes the decarboxylative condensation of pimeloyl-[acyl-carrier protein] and L-alanine to produce 8-amino-7-oxononanoate (AON), [acyl-carrier protein], and carbon dioxide. The protein is 8-amino-7-oxononanoate synthase of Maricaulis maris (strain MCS10) (Caulobacter maris).